Reading from the N-terminus, the 444-residue chain is Jacalin-related lectin 42 (444 aa).

Alanine 2 is subject to N-acetylalanine. Jacalin-type lectin domains lie at 2–143 (ALMV…YYIR), 146–289 (ATKS…YYAP), and 297–441 (TEKL…HVIP).

It belongs to the jacalin lectin family.

The sequence is that of Jacalin-related lectin 42 (JAL42) from Arabidopsis thaliana (Mouse-ear cress).